A 452-amino-acid chain; its full sequence is FAD-linked oxidoreductase DDB_G0289697 (452 aa).

One can recognise an FAD-binding PCMH-type domain in the interval 44–212; the sequence is VVNTPLLIVY…TDFTFKLHPV (169 aa). Histidine 81 is subject to Pros-8alpha-FAD histidine.

It belongs to the oxygen-dependent FAD-linked oxidoreductase family. It depends on FAD as a cofactor.

The sequence is that of FAD-linked oxidoreductase DDB_G0289697 from Dictyostelium discoideum (Social amoeba).